A 555-amino-acid chain; its full sequence is Carboxypeptidase Y homolog A (555 aa).

Residues 1–17 (MRGLATTLLIGAAAAAT) form the signal peptide. Positions 18-136 (YPAQQVLKAP…RLETFDLRVK (119 aa)) are excised as a propeptide. 5 disulfide bridges follow: Cys191–Cys430, Cys325–Cys339, Cys349–Cys372, Cys356–Cys365, and Cys394–Cys400. N-linked (GlcNAc...) asparagine glycosylation is present at Asn222. Ser278 is a catalytic residue. Asp469 is a catalytic residue. A glycan (N-linked (GlcNAc...) asparagine) is linked at Asn520. His531 is an active-site residue.

Belongs to the peptidase S10 family.

Its subcellular location is the vacuole. The catalysed reaction is Release of a C-terminal amino acid with broad specificity.. Vacuolar carboxypeptidase involved in degradation of small peptides. Digests preferentially peptides containing an aliphatic or hydrophobic residue in P1' position, as well as methionine, leucine or phenylalanine in P1 position of ester substrate. The sequence is that of Carboxypeptidase Y homolog A (cpyA) from Talaromyces marneffei (strain ATCC 18224 / CBS 334.59 / QM 7333) (Penicillium marneffei).